The sequence spans 335 residues: Beta-hexosaminidase (335 aa).

Substrate-binding positions include Asp-60, Arg-68, Arg-133, and 163 to 164 (KH). Residue His-176 is the Proton donor/acceptor of the active site. Asp-247 functions as the Nucleophile in the catalytic mechanism.

Belongs to the glycosyl hydrolase 3 family. NagZ subfamily.

The protein resides in the cytoplasm. It catalyses the reaction Hydrolysis of terminal non-reducing N-acetyl-D-hexosamine residues in N-acetyl-beta-D-hexosaminides.. Its pathway is cell wall biogenesis; peptidoglycan recycling. Functionally, plays a role in peptidoglycan recycling by cleaving the terminal beta-1,4-linked N-acetylglucosamine (GlcNAc) from peptide-linked peptidoglycan fragments, giving rise to free GlcNAc, anhydro-N-acetylmuramic acid and anhydro-N-acetylmuramic acid-linked peptides. This is Beta-hexosaminidase from Xylella fastidiosa (strain M12).